The sequence spans 335 residues: Holliday junction branch migration complex subunit RuvB (335 aa).

Residues 1 to 181 (MERIIEIEKM…FGMNFWMQFY (181 aa)) are large ATPase domain (RuvB-L). Residues Leu-20, Arg-21, Gly-62, Lys-65, Thr-66, Thr-67, 128 to 130 (EDF), Arg-171, Tyr-181, and Arg-218 contribute to the ATP site. Position 66 (Thr-66) interacts with Mg(2+). The tract at residues 182 to 252 (NIEELSQIIT…QARYALHELG (71 aa)) is small ATPAse domain (RuvB-S). Residues 255-335 (DHGFDDLDLR…LPFEPNATLF (81 aa)) form a head domain (RuvB-H) region. Residues Arg-309 and Arg-314 each coordinate DNA.

The protein belongs to the RuvB family. As to quaternary structure, homohexamer. Forms an RuvA(8)-RuvB(12)-Holliday junction (HJ) complex. HJ DNA is sandwiched between 2 RuvA tetramers; dsDNA enters through RuvA and exits via RuvB. An RuvB hexamer assembles on each DNA strand where it exits the tetramer. Each RuvB hexamer is contacted by two RuvA subunits (via domain III) on 2 adjacent RuvB subunits; this complex drives branch migration. In the full resolvosome a probable DNA-RuvA(4)-RuvB(12)-RuvC(2) complex forms which resolves the HJ.

Its subcellular location is the cytoplasm. The catalysed reaction is ATP + H2O = ADP + phosphate + H(+). The RuvA-RuvB-RuvC complex processes Holliday junction (HJ) DNA during genetic recombination and DNA repair, while the RuvA-RuvB complex plays an important role in the rescue of blocked DNA replication forks via replication fork reversal (RFR). RuvA specifically binds to HJ cruciform DNA, conferring on it an open structure. The RuvB hexamer acts as an ATP-dependent pump, pulling dsDNA into and through the RuvAB complex. RuvB forms 2 homohexamers on either side of HJ DNA bound by 1 or 2 RuvA tetramers; 4 subunits per hexamer contact DNA at a time. Coordinated motions by a converter formed by DNA-disengaged RuvB subunits stimulates ATP hydrolysis and nucleotide exchange. Immobilization of the converter enables RuvB to convert the ATP-contained energy into a lever motion, pulling 2 nucleotides of DNA out of the RuvA tetramer per ATP hydrolyzed, thus driving DNA branch migration. The RuvB motors rotate together with the DNA substrate, which together with the progressing nucleotide cycle form the mechanistic basis for DNA recombination by continuous HJ branch migration. Branch migration allows RuvC to scan DNA until it finds its consensus sequence, where it cleaves and resolves cruciform DNA. The chain is Holliday junction branch migration complex subunit RuvB from Wolinella succinogenes (strain ATCC 29543 / DSM 1740 / CCUG 13145 / JCM 31913 / LMG 7466 / NCTC 11488 / FDC 602W) (Vibrio succinogenes).